An 84-amino-acid chain; its full sequence is Small ribosomal subunit protein bS16 (84 aa).

The protein belongs to the bacterial ribosomal protein bS16 family.

This Dichelobacter nodosus (strain VCS1703A) protein is Small ribosomal subunit protein bS16.